A 129-amino-acid polypeptide reads, in one-letter code: Small ribosomal subunit protein uS11 (129 aa).

It belongs to the universal ribosomal protein uS11 family. As to quaternary structure, part of the 30S ribosomal subunit. Interacts with proteins S7 and S18. Binds to IF-3.

Its function is as follows. Located on the platform of the 30S subunit, it bridges several disparate RNA helices of the 16S rRNA. Forms part of the Shine-Dalgarno cleft in the 70S ribosome. This Oleidesulfovibrio alaskensis (strain ATCC BAA-1058 / DSM 17464 / G20) (Desulfovibrio alaskensis) protein is Small ribosomal subunit protein uS11.